The following is a 159-amino-acid chain: Succinate dehydrogenase [ubiquinone] cytochrome b small subunit, mitochondrial (159 aa).

The transit peptide at 1 to 56 (MAVLWRLSAVCGALGGRALLLRTPVVRPAHISAFLQDRPIPEWCGVQHIHLSPSHH) directs the protein to the mitochondrion. The Mitochondrial matrix portion of the chain corresponds to 57–63 (SGSKAAS). The chain crosses the membrane as a helical span at residues 64-85 (LHWTSERVVSVLLLGLLPAAYL). The Mitochondrial intermembrane segment spans residues 86-90 (NPCSA). Residues 91–111 (MDYSLAAALTLHGHWGLGQVV) form a helical membrane-spanning segment. Residue His-102 coordinates heme b. The Mitochondrial matrix segment spans residues 112–122 (TDYVHGDALQK). Position 114 (Tyr-114) interacts with a ubiquinone. A helical membrane pass occupies residues 123 to 144 (AAKAGLLALSALTFAGLCYFNY). The Mitochondrial intermembrane portion of the chain corresponds to 145-159 (HDVGICKAVAMLWKL).

The protein belongs to the CybS family. In terms of assembly, component of complex II composed of four subunits: the flavoprotein (FP) SDHA, iron-sulfur protein (IP) SDHB, and a cytochrome b560 composed of SDHC and SDHD.

Its subcellular location is the mitochondrion inner membrane. It functions in the pathway carbohydrate metabolism; tricarboxylic acid cycle. In terms of biological role, membrane-anchoring subunit of succinate dehydrogenase (SDH) that is involved in complex II of the mitochondrial electron transport chain and is responsible for transferring electrons from succinate to ubiquinone (coenzyme Q). SDH also oxidizes malate to the non-canonical enol form of oxaloacetate, enol-oxaloacetate. Enol-oxaloacetate, which is a potent inhibitor of the succinate dehydrogenase activity, is further isomerized into keto-oxaloacetate. The chain is Succinate dehydrogenase [ubiquinone] cytochrome b small subunit, mitochondrial (SDHD) from Homo sapiens (Human).